Consider the following 412-residue polypeptide: AA9 family lytic polysaccharide monooxygenase A (412 aa).

Residues 1–20 (MKTTTYSLLALAAASKLASA) form the signal peptide. Cu(2+) contacts are provided by histidine 21 and histidine 103. Cysteine 63 and cysteine 186 are joined by a disulfide. The N-linked (GlcNAc...) asparagine glycan is linked to asparagine 151. Histidine 172 provides a ligand contact to O2. Tyrosine 183 contacts Cu(2+). N-linked (GlcNAc...) asparagine glycosylation is found at asparagine 334 and asparagine 385. The CBM1 domain maps to 373–409 (GVAKMYERCGGINHTGPTTCESGSVCKKWNPYYYQCV).

It belongs to the polysaccharide monooxygenase AA9 family. Requires Cu(2+) as cofactor.

It localises to the secreted. The enzyme catalyses [(1-&gt;4)-beta-D-glucosyl]n+m + reduced acceptor + O2 = 4-dehydro-beta-D-glucosyl-[(1-&gt;4)-beta-D-glucosyl]n-1 + [(1-&gt;4)-beta-D-glucosyl]m + acceptor + H2O.. Its function is as follows. Lytic polysaccharide monooxygenase (LPMO) that depolymerizes crystalline and amorphous polysaccharides via the oxidation of scissile alpha- or beta-(1-4)-glycosidic bonds, yielding C4 oxidation products. Catalysis by LPMOs requires the reduction of the active-site copper from Cu(II) to Cu(I) by a reducing agent and H(2)O(2) or O(2) as a cosubstrate. This chain is AA9 family lytic polysaccharide monooxygenase A (eglD), found in Aspergillus niger (strain ATCC MYA-4892 / CBS 513.88 / FGSC A1513).